Consider the following 346-residue polypeptide: Ribosomal RNA small subunit methyltransferase H (346 aa).

Residues 47–49 (GGY), aspartate 65, phenylalanine 92, aspartate 113, and glutamine 120 each bind S-adenosyl-L-methionine. Over residues 270 to 279 (RGEAPSRRLP) the composition is skewed to basic and acidic residues. The tract at residues 270–346 (RGEAPSRRLP…ALPQRAAKGR (77 aa)) is disordered.

It belongs to the methyltransferase superfamily. RsmH family.

It is found in the cytoplasm. It carries out the reaction cytidine(1402) in 16S rRNA + S-adenosyl-L-methionine = N(4)-methylcytidine(1402) in 16S rRNA + S-adenosyl-L-homocysteine + H(+). In terms of biological role, specifically methylates the N4 position of cytidine in position 1402 (C1402) of 16S rRNA. The sequence is that of Ribosomal RNA small subunit methyltransferase H from Methylocella silvestris (strain DSM 15510 / CIP 108128 / LMG 27833 / NCIMB 13906 / BL2).